Consider the following 460-residue polypeptide: Elongation factor 1-alpha (460 aa).

Glycine 2 carries the post-translational modification N,N,N-trimethylglycine. An N6,N6-dimethyllysine; alternate modification is found at lysine 3. Residue lysine 3 is modified to N6-methyllysine; alternate. The 236-residue stretch at lysine 5 to serine 240 folds into the tr-type G domain. The G1 stretch occupies residues glycine 14–serine 21. Position 14–21 (glycine 14–serine 21) interacts with GTP. Lysine 30 bears the N6-methyllysine mark. A G2 region spans residues glycine 70 to aspartate 74. Lysine 79 carries the post-translational modification N6,N6,N6-trimethyllysine. Positions aspartate 91 to glycine 94 are G3. Residues aspartate 91–histidine 95 and asparagine 153–aspartate 156 contribute to the GTP site. The tract at residues asparagine 153–aspartate 156 is G4. Residues serine 192–tryptophan 194 form a G5 region. Lysine 316 is subject to N6,N6-dimethyllysine; alternate. N6-methyllysine; alternate is present on lysine 316. An N6-methyllysine modification is found at lysine 390.

The protein belongs to the TRAFAC class translation factor GTPase superfamily. Classic translation factor GTPase family. EF-Tu/EF-1A subfamily.

The protein resides in the cytoplasm. In terms of biological role, this protein promotes the GTP-dependent binding of aminoacyl-tRNA to the A-site of ribosomes during protein biosynthesis. This Schizophyllum commune (Split gill fungus) protein is Elongation factor 1-alpha (TEF1).